Reading from the N-terminus, the 74-residue chain is MDFEEMMKELEEIVNRLESEDLSLEESIELFQRGVELYKKCREILQKEQLKIIDVLKELEGDEDDAGRNQEDES.

Belongs to the XseB family. As to quaternary structure, heterooligomer composed of large and small subunits.

The protein resides in the cytoplasm. The catalysed reaction is Exonucleolytic cleavage in either 5'- to 3'- or 3'- to 5'-direction to yield nucleoside 5'-phosphates.. Bidirectionally degrades single-stranded DNA into large acid-insoluble oligonucleotides, which are then degraded further into small acid-soluble oligonucleotides. The protein is Exodeoxyribonuclease 7 small subunit of Thermotoga neapolitana (strain ATCC 49049 / DSM 4359 / NBRC 107923 / NS-E).